Consider the following 125-residue polypeptide: Mitochondrial import inner membrane translocase subunit tim16-A (125 aa).

The tract at residues 58–110 (EAQQILNVSKLTPEEIQKNYEHLFKVNDKGLGGSFYLQSKVVRAKERLDQEME) is J-like.

The protein belongs to the TIM16/PAM16 family. As to quaternary structure, probable component of the PAM complex at least composed of 1 mitochondrial HSP70 protein, 1 GRPE, 1 TIMM44, 1 TIMM16/PAM16 and 1 TIMM14. Associates with the TIM23 complex.

The protein localises to the mitochondrion inner membrane. Regulates ATP-dependent protein translocation into the mitochondrial matrix. The polypeptide is Mitochondrial import inner membrane translocase subunit tim16-A (pam16-a) (Xenopus laevis (African clawed frog)).